The primary structure comprises 727 residues: DNA replication licensing factor MCM5 (727 aa).

The region spanning valine 325–isoleucine 531 is the MCM domain. Residue glycine 375 to serine 382 participates in ATP binding. Residues serine 507–aspartate 510 carry the Arginine finger motif.

Belongs to the MCM family. Component of the minichromosome maintenance (MCM) complex, a heterotetramer composed of MCM2, MCM3, MCM4, MCM5, MCM6 and MCM7. Interacts with EGT1. As to expression, expressed in shoot apex and flower buds.

The protein localises to the nucleus. Its subcellular location is the cytoplasm. The catalysed reaction is ATP + H2O = ADP + phosphate + H(+). Its function is as follows. Probable component of the MCM2-7 complex (MCM complex) that may function as a DNA helicase and which is essential to undergo a single round of replication initiation and elongation per cell cycle in eukaryotic cells. This chain is DNA replication licensing factor MCM5 (MCM5), found in Arabidopsis thaliana (Mouse-ear cress).